The following is a 21-amino-acid chain: Large ribosomal subunit protein uL10 (21 aa).

The protein belongs to the universal ribosomal protein uL10 family. Part of the ribosomal stalk of the 50S ribosomal subunit. The N-terminus interacts with L11 and the large rRNA to form the base of the stalk. The C-terminus forms an elongated spine to which L12 dimers bind in a sequential fashion forming a multimeric L10(L12)X complex.

In terms of biological role, forms part of the ribosomal stalk, playing a central role in the interaction of the ribosome with GTP-bound translation factors. The polypeptide is Large ribosomal subunit protein uL10 (rplJ) (Proteus vulgaris).